The following is a 337-amino-acid chain: Ketol-acid reductoisomerase (NADP(+)) (337 aa).

The KARI N-terminal Rossmann domain occupies 1-180 (MQVYYDKDAD…GGTKGGVIET (180 aa)). NADP(+) is bound by residues 24–27 (YGSQ), Arg47, and Ser51. His106 is an active-site residue. Residue Gly132 participates in NADP(+) binding. Residues 181-326 (TFREETETDL…AQLRAMMPWI (146 aa)) form the KARI C-terminal knotted domain. The Mg(2+) site is built by Asp189, Glu193, Glu225, and Glu229. A substrate-binding site is contributed by Ser250.

Belongs to the ketol-acid reductoisomerase family. Mg(2+) serves as cofactor.

It carries out the reaction (2R)-2,3-dihydroxy-3-methylbutanoate + NADP(+) = (2S)-2-acetolactate + NADPH + H(+). It catalyses the reaction (2R,3R)-2,3-dihydroxy-3-methylpentanoate + NADP(+) = (S)-2-ethyl-2-hydroxy-3-oxobutanoate + NADPH + H(+). It participates in amino-acid biosynthesis; L-isoleucine biosynthesis; L-isoleucine from 2-oxobutanoate: step 2/4. It functions in the pathway amino-acid biosynthesis; L-valine biosynthesis; L-valine from pyruvate: step 2/4. Involved in the biosynthesis of branched-chain amino acids (BCAA). Catalyzes an alkyl-migration followed by a ketol-acid reduction of (S)-2-acetolactate (S2AL) to yield (R)-2,3-dihydroxy-isovalerate. In the isomerase reaction, S2AL is rearranged via a Mg-dependent methyl migration to produce 3-hydroxy-3-methyl-2-ketobutyrate (HMKB). In the reductase reaction, this 2-ketoacid undergoes a metal-dependent reduction by NADPH to yield (R)-2,3-dihydroxy-isovalerate. This Neisseria meningitidis serogroup A / serotype 4A (strain DSM 15465 / Z2491) protein is Ketol-acid reductoisomerase (NADP(+)).